The chain runs to 440 residues: MAENNENISKNVDVRPKTSRSRSADRKDGYVWSGKKLSWSKKSESYSDAETVNGIEKTEVSLRNQERKHSCSSIELDLDHSCGHRFLGRSLKQKLQDAVGQCFPIKNCSSRHSSGLPSKRKIHISELMLDKCPFPPRSDLAFRWHFIKRHTAPINSKSDEWVSTDLSQTELRDGQLKRRNMEENINCFSHTNVQPCVITTDNALCREGPMTGSVMNLVSNNSIEDSDMDSDDEILTLCTSSRKRNKPKWDLDDEILQLETPPKYHTQIDYVHCLVPDLLQINNNPCYWGVMDKYAAEALLEGKPEGTFLLRDSAQEDYLFSVSFRRYSRSLHARIEQWNHNFSFDAHDPCVFHSPDITGLLEHYKDPSACMFFEPLLSTPLIRTFPFSLQHICRTVICNCTTYDGIDALPIPSSMKLYLKEYHYKSKVRVLRIDAPEQQC.

Positions 1–10 (MAENNENISK) are enriched in polar residues. Residues 1–29 (MAENNENISKNVDVRPKTSRSRSADRKDG) are disordered. Positions 12–29 (VDVRPKTSRSRSADRKDG) are enriched in basic and acidic residues. In terms of domain architecture, SH2 spans 286–381 (CYWGVMDKYA…FFEPLLSTPL (96 aa)). The SOCS box domain occupies 376–425 (LLSTPLIRTFPFSLQHICRTVICNCTTYDGIDALPIPSSMKLYLKEYHYK).

The protein operates within protein modification; protein ubiquitination. Functionally, SOCS family proteins form part of a classical negative feedback system that regulates cytokine signal transduction. Substrate-recognition component of a SCF-like ECS (Elongin BC-CUL2/5-SOCS-box protein) E3 ubiquitin-protein ligase complex which mediates the ubiquitination and subsequent proteasomal degradation of target proteins. Inhibits EGF signaling by mediating the degradation of the Tyr-phosphorylated EGF receptor/EGFR. This Homo sapiens (Human) protein is Suppressor of cytokine signaling 4 (SOCS4).